The sequence spans 455 residues: MASTTGALILAAGKGTRMHSDKPKVLQTILGEPMLRFVMDALAPVFGDRVWTVVGHRADMIYAAFAGEDARFVVQEQQLGTGHALQMAWESLRAAGLDRVVVVNGDTPLLATETIDFFLKESAEADIAFMTLTLPDPGAYGRVVRHNGHVAAIVEAKDYDEALYGPEPSEINTGIYALRLDAVESLLPRLTNANRSGEYYITDLVGLAVAERMNVLGIQCGEDPNLLGVNNPAELIRSEALLRTRLVIGHIEGGVLIHAPETVRISPRATIEPGAEIYGPCEIYGTSRIARGAVVHSHCWLRNAEVESGSEVKSFSHLEGATVGKGCSVGPFARLRPGAVLDEEARVGNFVEMKKARLHKGAKAGHLTYLGDADVGAGANIGAGTITCNYDGKNKHRTVIGAGAFIGSNTALVAPVTVGDGSLVGAGSVITKDVPEASLAIARGRQTNLPRKPKA.

A pyrophosphorylase region spans residues 1 to 232; sequence MASTTGALIL…DPNLLGVNNP (232 aa). UDP-N-acetyl-alpha-D-glucosamine-binding positions include 10–13, Lys24, Gln75, and 80–81; these read LAAG and GT. Residue Asp106 participates in Mg(2+) binding. Gly141, Glu155, Asn172, and Asn230 together coordinate UDP-N-acetyl-alpha-D-glucosamine. Asn230 lines the Mg(2+) pocket. The linker stretch occupies residues 233-253; it reads AELIRSEALLRTRLVIGHIEG. An N-acetyltransferase region spans residues 254–455; that stretch reads GVLIHAPETV…QTNLPRKPKA (202 aa). 2 residues coordinate UDP-N-acetyl-alpha-D-glucosamine: Arg336 and Lys354. Residue His366 is the Proton acceptor of the active site. UDP-N-acetyl-alpha-D-glucosamine is bound by residues Tyr369 and Asn380. Residues Ala383, 389-390, Ser408, Ala426, and Arg443 contribute to the acetyl-CoA site; that span reads NY.

The protein in the N-terminal section; belongs to the N-acetylglucosamine-1-phosphate uridyltransferase family. It in the C-terminal section; belongs to the transferase hexapeptide repeat family. Homotrimer. The cofactor is Mg(2+).

Its subcellular location is the cytoplasm. It carries out the reaction alpha-D-glucosamine 1-phosphate + acetyl-CoA = N-acetyl-alpha-D-glucosamine 1-phosphate + CoA + H(+). It catalyses the reaction N-acetyl-alpha-D-glucosamine 1-phosphate + UTP + H(+) = UDP-N-acetyl-alpha-D-glucosamine + diphosphate. The protein operates within nucleotide-sugar biosynthesis; UDP-N-acetyl-alpha-D-glucosamine biosynthesis; N-acetyl-alpha-D-glucosamine 1-phosphate from alpha-D-glucosamine 6-phosphate (route II): step 2/2. Its pathway is nucleotide-sugar biosynthesis; UDP-N-acetyl-alpha-D-glucosamine biosynthesis; UDP-N-acetyl-alpha-D-glucosamine from N-acetyl-alpha-D-glucosamine 1-phosphate: step 1/1. It functions in the pathway bacterial outer membrane biogenesis; LPS lipid A biosynthesis. Its function is as follows. Catalyzes the last two sequential reactions in the de novo biosynthetic pathway for UDP-N-acetylglucosamine (UDP-GlcNAc). The C-terminal domain catalyzes the transfer of acetyl group from acetyl coenzyme A to glucosamine-1-phosphate (GlcN-1-P) to produce N-acetylglucosamine-1-phosphate (GlcNAc-1-P), which is converted into UDP-GlcNAc by the transfer of uridine 5-monophosphate (from uridine 5-triphosphate), a reaction catalyzed by the N-terminal domain. In Nitratidesulfovibrio vulgaris (strain ATCC 29579 / DSM 644 / CCUG 34227 / NCIMB 8303 / VKM B-1760 / Hildenborough) (Desulfovibrio vulgaris), this protein is Bifunctional protein GlmU.